The following is a 273-amino-acid chain: Putative pyruvate, phosphate dikinase regulatory protein (273 aa).

Position 153-160 (153-160 (GVSRTSKS)) interacts with ADP.

It belongs to the pyruvate, phosphate/water dikinase regulatory protein family. PDRP subfamily.

The enzyme catalyses N(tele)-phospho-L-histidyl/L-threonyl-[pyruvate, phosphate dikinase] + ADP = N(tele)-phospho-L-histidyl/O-phospho-L-threonyl-[pyruvate, phosphate dikinase] + AMP + H(+). It carries out the reaction N(tele)-phospho-L-histidyl/O-phospho-L-threonyl-[pyruvate, phosphate dikinase] + phosphate + H(+) = N(tele)-phospho-L-histidyl/L-threonyl-[pyruvate, phosphate dikinase] + diphosphate. Its function is as follows. Bifunctional serine/threonine kinase and phosphorylase involved in the regulation of the pyruvate, phosphate dikinase (PPDK) by catalyzing its phosphorylation/dephosphorylation. This is Putative pyruvate, phosphate dikinase regulatory protein from Ehrlichia ruminantium (strain Gardel).